The chain runs to 876 residues: AP-5 complex subunit beta-1 (876 aa).

Probably part of the adaptor protein complex 5 (AP-5), a tetramer composed of AP5B1, AP5M1, AP5S1 and AP5Z1. Interacts with ZFYVE26 and SPG11.

In terms of biological role, as part of AP-5, a probable fifth adaptor protein complex it may be involved in endosomal transport. This Mus musculus (Mouse) protein is AP-5 complex subunit beta-1 (Ap5b1).